A 33-amino-acid chain; its full sequence is Cytochrome b6-f complex subunit 7 (33 aa).

A helical transmembrane segment spans residues 5–25 (IFNTAVITFTLVLVGLGAGYL).

This sequence belongs to the PetM family. The 4 large subunits of the cytochrome b6-f complex are cytochrome b6, subunit IV (17 kDa polypeptide, PetD), cytochrome f and the Rieske protein, while the 4 small subunits are PetG, PetL, PetM and PetN. The complex functions as a dimer.

It is found in the cellular thylakoid membrane. Component of the cytochrome b6-f complex, which mediates electron transfer between photosystem II (PSII) and photosystem I (PSI), cyclic electron flow around PSI, and state transitions. The chain is Cytochrome b6-f complex subunit 7 from Thermosynechococcus vestitus (strain NIES-2133 / IAM M-273 / BP-1).